The following is a 303-amino-acid chain: MNQIDITASEEQKSERIDKFLASTENDWSRTQVQQWVKDGQVVVNGSAVKANYKIQPGDQVTVTVPEPEALDVLAEPMDLDIYYEDQDVLVVNKPRGMVVHPAPGHLTGTLVNGLMAHCTDLSGINGVMRPGIVHRIDKDTSGLLMVAKNDMAHESLVNQLVNKTVTRKYTAVVHGLISHDDGTIDAPIGRDKKDRQSMTVTRDGKNAVTHFHVLERFQDFTLVECQLETGRTHQIRVHMKYIGFPLAGDPKYGPRKTIDFNGQALHAGVLGFDHPRTGEYVEFEAPLPEDMAELIENLRKNG.

Residues 15–74 enclose the S4 RNA-binding domain; it reads ERIDKFLASTENDWSRTQVQQWVKDGQVVVNGSAVKANYKIQPGDQVTVTVPEPEALDVL. Aspartate 138 is a catalytic residue.

It belongs to the pseudouridine synthase RluA family.

It catalyses the reaction a uridine in RNA = a pseudouridine in RNA. This is an uncharacterized protein from Bacillus subtilis (strain 168).